Consider the following 503-residue polypeptide: Probable cytosol aminopeptidase (503 aa).

Residues Lys-270 and Asp-275 each coordinate Mn(2+). Lys-282 is a catalytic residue. Asp-293, Asp-352, and Glu-354 together coordinate Mn(2+). Arg-356 is an active-site residue.

This sequence belongs to the peptidase M17 family. Mn(2+) serves as cofactor.

Its subcellular location is the cytoplasm. The catalysed reaction is Release of an N-terminal amino acid, Xaa-|-Yaa-, in which Xaa is preferably Leu, but may be other amino acids including Pro although not Arg or Lys, and Yaa may be Pro. Amino acid amides and methyl esters are also readily hydrolyzed, but rates on arylamides are exceedingly low.. It carries out the reaction Release of an N-terminal amino acid, preferentially leucine, but not glutamic or aspartic acids.. Presumably involved in the processing and regular turnover of intracellular proteins. Catalyzes the removal of unsubstituted N-terminal amino acids from various peptides. This chain is Probable cytosol aminopeptidase, found in Salmonella agona (strain SL483).